A 608-amino-acid chain; its full sequence is MLNGQIAHSYLENSCTLIIPRPPVLNQSSKSAQPAAAAAASSSAGEEFGQEAGSGLAEAEALHVDRIRNCDIFVDAHDLYFYADVKLYKFHSRRTFDLRELKTLLIKFNTTENHYQICLRCLPLTAGAQEGPGGERGGGGGTGDAAKQWNSRKEYIAAFLHLPTLSANLPDKQPLVQEWKLKRITDQCQLQLDDHERTYKLTNNFGYGYASEYSGPLDLSELDRATCRVSEPHRMSPIQRRQERVVDEMKRFSREQYKINFVELQVPSGHQNPLRYKPKIYETSMTQEQAHLLHNISRMQTREQQPCDVFRQNEIDCGLISILLAICYDVRTTNNEPTCESGWTRSILCPLYCYFEQFDNYRDVLVAFLRRMITYPLYRNFELGRQCVRDAIEVLKGGRNWLINQLLLTHQQFASSDPSRDSFNNYYLEDYIRYVTSPSACSDEHMRLLARNLKNVLMDVNKQHLGLGVTEIETELIKELMQEMRIDAGSQGSSPQQQHGDDDLDLDNDTSGQEDETTTDDESVITDSFYSVDMDMRLIENEIVYEDDEEDEDDDEDGDDDEDGDGDEDEDEDEDEDDSSSSTTTSSEAEGNSVIEQCSNSETAASTT.

2 disordered regions span residues D487–S531 and I543–T608. A compositionally biased stretch (low complexity) spans G489–Q498. Composition is skewed to acidic residues over residues D502–V524 and I543–S579. The span at E588–T608 shows a compositional bias: polar residues.

This sequence belongs to the SHQ1 family.

Its function is as follows. Required for the quantitative accumulation of H/ACA ribonucleoproteins (RNPs). The chain is Protein SHQ1 homolog from Drosophila melanogaster (Fruit fly).